The following is a 499-amino-acid chain: Low-affinity inorganic phosphate transporter PitA (499 aa).

Residues methionine 1–leucine 4 lie on the Periplasmic side of the membrane. Residues phenylalanine 5–phenylalanine 25 form a helical membrane-spanning segment. Topologically, residues tyrosine 26–glutamine 51 are cytoplasmic. A helical membrane pass occupies residues leucine 52–valine 72. Over alanine 73–glycine 93 the chain is Periplasmic. Residues leucine 94–phenylalanine 114 traverse the membrane as a helical segment. Topologically, residues glycine 115 to threonine 123 are cytoplasmic. The helical transmembrane segment at leucine 124 to valine 144 threads the bilayer. The Periplasmic portion of the chain corresponds to aspartate 145–serine 154. A helical membrane pass occupies residues isoleucine 155–phenylalanine 175. Topologically, residues leucine 176–proline 206 are cytoplasmic. The chain crosses the membrane as a helical span at residues proline 207 to alanine 227. Over asparagine 228–lysine 232 the chain is Periplasmic. The chain crosses the membrane as a helical span at residues glycine 233–methionine 253. Residues asparagine 254–tyrosine 381 lie on the Cytoplasmic side of the membrane. Residues alanine 382–tryptophan 402 form a helical membrane-spanning segment. Over arginine 403–threonine 429 the chain is Periplasmic. The chain crosses the membrane as a helical span at residues alanine 430–leucine 450. The Cytoplasmic segment spans residues serine 451–serine 472. A helical transmembrane segment spans residues isoleucine 473–tryptophan 493. The Periplasmic portion of the chain corresponds to leucine 494 to leucine 499.

The protein belongs to the inorganic phosphate transporter (PiT) (TC 2.A.20) family. Pit subfamily.

It is found in the cell inner membrane. It carries out the reaction phosphate(in) + H(+)(in) = phosphate(out) + H(+)(out). Its function is as follows. Low-affinity inorganic phosphate transporter. The chain is Low-affinity inorganic phosphate transporter PitA (pitA) from Escherichia coli O157:H7.